The following is a 305-amino-acid chain: Superkiller complex protein 8 (305 aa).

An N-acetylmethionine modification is found at methionine 1. Threonine 2 carries the post-translational modification N-acetylthreonine; in WD repeat-containing protein 61, N-terminally processed. 7 WD repeats span residues alanine 14–glutamine 57, glycine 62–serine 101, alanine 104–serine 143, threonine 146–glutamate 187, glycine 188–threonine 227, glycine 230–threonine 269, and aspartate 272–isoleucine 305.

It belongs to the SKI8 family. Component of the PAF1 complex, which consists of CDC73, PAF1, LEO1, CTR9, RTF1 and SKIC8. The PAF1 complex interacts with PHF5A. Within the PAF1 complex interacts directly with PHF5A. Component of the SKI complex which consists of SKIC2, SKIC3 and SKIC8.

It localises to the nucleus. It is found in the cytoplasm. Functionally, component of the PAF1 complex (PAF1C) which has multiple functions during transcription by RNA polymerase II and is implicated in regulation of development and maintenance of embryonic stem cell pluripotency. PAF1C associates with RNA polymerase II through interaction with POLR2A CTD non-phosphorylated and 'Ser-2'- and 'Ser-5'-phosphorylated forms and is involved in transcriptional elongation, acting both independently and synergistically with TCEA1 and in cooperation with the DSIF complex and HTATSF1. PAF1C is required for transcription of Hox and Wnt target genes. PAF1C is involved in hematopoiesis and stimulates transcriptional activity of KMT2A/MLL1; it promotes leukemogenesis through association with KMT2A/MLL1-rearranged oncoproteins, such as KMT2A/MLL1-MLLT3/AF9 and KMT2A/MLL1-MLLT1/ENL. PAF1C is involved in histone modifications such as ubiquitination of histone H2B and methylation on histone H3 'Lys-4' (H3K4me3). PAF1C recruits the RNF20/40 E3 ubiquitin-protein ligase complex and the E2 enzyme UBE2A or UBE2B to chromatin which mediate monoubiquitination of 'Lys-120' of histone H2B (H2BK120ub1); UB2A/B-mediated H2B ubiquitination is proposed to be coupled to transcription. PAF1C is involved in mRNA 3' end formation probably through association with cleavage and poly(A) factors. In case of infection by influenza A strain H3N2, PAF1C associates with viral NS1 protein, thereby regulating gene transcription. Required for mono- and trimethylation on histone H3 'Lys-4' (H3K4me3), dimethylation on histone H3 'Lys-79' (H3K4me3). Required for Hox gene transcription. Also acts as a component of the SKI complex, a multiprotein complex that assists the RNA-degrading exosome during the mRNA decay and quality-control pathways. The SKI complex catalyzes mRNA extraction from 80S ribosomal complexes in the 3'-5' direction and channels mRNA to the cytosolic exosome for degradation. SKI-mediated extraction of mRNA from stalled ribosomes allow binding of the Pelota-HBS1L complex and subsequent ribosome disassembly by ABCE1 for ribosome recycling. This Homo sapiens (Human) protein is Superkiller complex protein 8.